The sequence spans 229 residues: Putative germin-like protein subfamily 1 member 2 (229 aa).

The first 24 residues, 1–24 (MKGLVQFLVAKIILLVLASTFVHC), serve as a signal peptide directing secretion. Cysteine 34 and cysteine 50 are oxidised to a cystine. Residues asparagine 38 and asparagine 71 are each glycosylated (N-linked (GlcNAc...) asparagine). One can recognise a Cupin type-1 domain in the interval 64–215 (SGLNIPGNTS…AFALDVNIVR (152 aa)). Residues histidine 112 and histidine 114 each contribute to the Mn(2+) site. Asparagine 139 carries N-linked (GlcNAc...) asparagine glycosylation. Histidine 163 is a binding site for Mn(2+).

Belongs to the germin family. Oligomer (believed to be a pentamer but probably hexamer).

The protein localises to the secreted. The protein resides in the extracellular space. It localises to the apoplast. May play a role in plant defense. Probably has no oxalate oxidase activity even if the active site is conserved. In Arabidopsis thaliana (Mouse-ear cress), this protein is Putative germin-like protein subfamily 1 member 2.